The chain runs to 109 residues: uncharacterized protein (109 aa).

The helical transmembrane segment at 12–32 threads the bilayer; it reads PNILIKGVYIFVLYGMCICIV.

Its subcellular location is the membrane. This is an uncharacterized protein from Saccharomyces cerevisiae (strain ATCC 204508 / S288c) (Baker's yeast).